The sequence spans 307 residues: Probable thioesterase KK1J (307 aa).

The protein belongs to the AMT4 thioesterase family.

Its pathway is secondary metabolite biosynthesis. Functionally, probable thioesterase; part of the gene cluster that mediates the biosynthesis of KK-1, a novel cyclic depsipeptide with 10 residues which is a promising active compound with high activity against many plant pathogens, especially Botrytis cinerea. Within the pathway, kk1J is not essential for the biosynthesis of KK-1, but plays a role for efficient production via correction of peptide chain synthesis by kk1B. The nonribosomal peptide synthetase (NRPS) kk1B catalyzes the elongation and cyclization of the decapeptide chain composed of 1 D-lactic acid residue (D-Lac), 1 pipecolic acid residue (Pip), 1 aspartic acid residue (Asp), 1 isoleucine residue (Ile), 1 glycine residue (Gly), 1 tyrosine residue (Tyr) and 4 valine residues (Val). The Asp, Ile and 3 Val residues are N-methylated by the 5 methyltransferase domains from the NRPS (found in modules 3, 5, 6, 7 and 9), whereas the Tyr residue is O-methylated by the cluster encoded O-methyltransferase kk1A. The thioesterase kk1J is likely to be involved in the corrective mechanism of peptide chain synthesis. The D-lactate dehydrogenase kk1H is involved in the synthesis of D-lactic acid from pyruvic acid, which is recognized by the A domain of the first kk1B module. The pyrroline-5-carboxylate reductase kk1I is involved in the synthesis of the L-pipecolic acid residue of KK-1 from delta-1-pyrroline-5-carboxylate (P5C), a metabolic intermediate of lysine. It still is unclear how kk1C and kk1D are involved in the production of KK-1. In Curvularia clavata, this protein is Probable thioesterase KK1J.